The following is a 411-amino-acid chain: Flavohemoprotein (411 aa).

One can recognise a Globin domain in the interval 5-142 (TLSQETKQIV…IADVFIQVEK (138 aa)). H89 contacts heme b. Active-site charge relay system residues include Y99 and E141. Positions 153-411 (GGWREFRSFV…FGPAGTLASS (259 aa)) are reductase. One can recognise an FAD-binding FR-type domain in the interval 156 to 267 (REFRSFVVEK…TAPAGDFTLQ (112 aa)). Residues Y194 and 210 to 213 (RQYS) each bind FAD. 280–285 (GVGITP) contributes to the NADP(+) binding site. 401–404 (FFGP) is a binding site for FAD.

The protein belongs to the globin family. Two-domain flavohemoproteins subfamily. This sequence in the C-terminal section; belongs to the flavoprotein pyridine nucleotide cytochrome reductase family. Heme b is required as a cofactor. It depends on FAD as a cofactor.

The enzyme catalyses 2 nitric oxide + NADPH + 2 O2 = 2 nitrate + NADP(+) + H(+). It catalyses the reaction 2 nitric oxide + NADH + 2 O2 = 2 nitrate + NAD(+) + H(+). Functionally, is involved in NO detoxification in an aerobic process, termed nitric oxide dioxygenase (NOD) reaction that utilizes O(2) and NAD(P)H to convert NO to nitrate, which protects the bacterium from various noxious nitrogen compounds. Therefore, plays a central role in the inducible response to nitrosative stress. This chain is Flavohemoprotein, found in Halalkalibacterium halodurans (strain ATCC BAA-125 / DSM 18197 / FERM 7344 / JCM 9153 / C-125) (Bacillus halodurans).